Here is a 485-residue protein sequence, read N- to C-terminus: Telomeric DNA-binding factor trf1 (485 aa).

Residues 1–20 (MSKRSLDPSDDFKGQKRLAI) are compositionally biased toward basic and acidic residues. Residues 1–23 (MSKRSLDPSDDFKGQKRLAIDPE) form a disordered region. The HTH myb-type domain occupies 400–457 (RRVANRRSWTKEEEEALLDGLDLVKGPRWSQILELYGPGGKKSEVLKYRNQVQLKDKA). Residues 428–453 (WSQILELYGPGGKKSEVLKYRNQVQL) constitute a DNA-binding region (H-T-H motif).

Homodimer.

It localises to the nucleus. Binds the telomeric double-stranded TTACAGG repeat and regulates telomere length. This is Telomeric DNA-binding factor trf1 (trf1) from Schizosaccharomyces pombe (strain 972 / ATCC 24843) (Fission yeast).